The primary structure comprises 330 residues: Ferric enterobactin transport system permease protein FepG (330 aa).

The Periplasmic portion of the chain corresponds to 1 to 7; that stretch reads MIYVSRR. A helical transmembrane segment spans residues 8-28; sequence LLITCLLLVSACVVAGIWGLR. Over 29–62 the chain is Cytoplasmic; sequence SGAVTLETSQVFAALMGDAPRSMTMVVTEWRLPR. A helical membrane pass occupies residues 63–83; it reads VLMALLIGAALGVSGAIFQSL. Over 84-92 the chain is Periplasmic; it reads MRNPLGSPD. The helical transmembrane segment at 93–113 threads the bilayer; the sequence is VMGFNTGAWSGVLVAMVLFGQ. The Cytoplasmic segment spans residues 114 to 117; sequence DLTA. A helical membrane pass occupies residues 118–138; the sequence is IALSAMVGGIVTSLLVWLLAW. Residues 139–146 are Periplasmic-facing; it reads RNGIDTFR. Residues 147–167 traverse the membrane as a helical segment; sequence LIIIGIGVRAMLVAFNTWLLL. Topologically, residues 168 to 190 are cytoplasmic; the sequence is KASLETALTAGLWNAGSLNGLTW. A helical membrane pass occupies residues 191–211; sequence AKTSPSAPIIILMLIAAALLV. The Periplasmic portion of the chain corresponds to 212 to 235; that stretch reads RRMRLLEMGDDTACALGVSVERSR. The chain crosses the membrane as a helical span at residues 236-256; sequence LLMMLVAVVLTAAATALAGPI. Topologically, residues 257-275 are cytoplasmic; the sequence is SFIALVAPHIARRISGTAR. Residues 276 to 296 form a helical membrane-spanning segment; the sequence is WGLTQAALCGALLLLAADLCA. Over 297 to 303 the chain is Periplasmic; it reads QQLFMPY. Residues 304–324 traverse the membrane as a helical segment; sequence QLPVGVVTVSLGGIYLIVLLI. The Cytoplasmic portion of the chain corresponds to 325-330; that stretch reads QESRKK.

The protein belongs to the binding-protein-dependent transport system permease family. FecCD subfamily. As to quaternary structure, the complex is composed of two ATP-binding proteins (FepC), two transmembrane proteins (FepD and FepG) and a solute-binding protein (FepB).

It is found in the cell inner membrane. Its function is as follows. Part of the ABC transporter complex FepBDGC involved in ferric enterobactin uptake. Responsible for the translocation of the substrate across the membrane. This is Ferric enterobactin transport system permease protein FepG (fepG) from Escherichia coli (strain K12).